The following is a 942-amino-acid chain: MDTKEEKKERKQSYFARLKKKKQAKQNAETASAVATRTHTGKEDNNTVVLEPDKCNIAVEEEYMTDEKKKRKSNQLKEIRRTELKRYYSIDDNQNKTHDKKEKKMVVQKPHGTMEYTAGNQDTLNSIALKFNITPNKLVELNKLFTHTIVPGQVLFVPDANSPSSTLRLSSSSPGATVSPSSSDAEYDKLPDADLARKALKPIERVLSSTSEEDEPGVVKFLKMNCRYFTDGKGVVGGVMIVTPNNIMFDPHKSDPLVIENGCEEYGLICPMEEVVSIALYNDISHMKIKDALPSDLPQDLCPLYRPGEWEDLASEKDINPFSKFKSINKEKRQQNGEKIMTSDSRPIVPLEKSTGHTPTKPSGSSVSEKLKKLDSSRETSHGSPTVTKLSKEPSDTSSAFESTAKENFLGEDDDFVDLEELSSQTGGGMHKKDTLKECLSLDPEERKKAESQINNSAVEMQVQSALAFLGTENDVELKGALDLETCEKQDIMPEVDKQSGSPESRVENTLNIHEDLDKVKLIEYYLTKNKEGPQVSENLQKTELSDGKSIEPGGIDITLSSSLSQAGDPITEGNKEPDKTWVKKGEPLPVKLNSSTEANVIKEALDSSLESTLDNSCQGAQMDNKSEVQLWLLKRIQVPIEDILPSKEEKSKTPPMFLCIKVGKPMRKSFATHTAAMVQQYGKRRKQPEYWFAVPRERVDHLYTFFVQWSPDVYGKDAKEQGFVVVEKEELNMIDNFFSEPTTKSWEIITVEEAKRRKSTCSYYEDEDEEVLPVLRPHSALLENMHIEQLARRLPARVQGYPWRLAYSTLEHGTSLKTLYRKSASLDSPVLLVIKDMDNQIFGAYATHPFKFSDHYYGTGETFLYTFSPHFKVFKWSGENSYFINGDISSLELGGGGGRFGLWLDADLYHGRSNSCSTFNNDILSKKEDFIVQDLEVWAFD.

M1 carries the N-acetylmethionine modification. Residues 1–12 (MDTKEEKKERKQ) show a composition bias toward basic and acidic residues. The disordered stretch occupies residues 1–46 (MDTKEEKKERKQSYFARLKKKKQAKQNAETASAVATRTHTGKEDNN). Positions 4–29 (KEEKKERKQSYFARLKKKKQAKQNAE) form a coiled coil. Polar residues predominate over residues 25–38 (KQNAETASAVATRT). S89 is subject to Phosphoserine. The LysM domain maps to 114-157 (MEYTAGNQDTLNSIALKFNITPNKLVELNKLFTHTIVPGQVLFV). At T134 the chain carries Phosphothreonine. The tract at residues 161–188 (NSPSSTLRLSSSSPGATVSPSSSDAEYD) is disordered. The segment covering 162 to 183 (SPSSTLRLSSSSPGATVSPSSS) has biased composition (low complexity). A phosphoserine mark is found at S179, S183, S208, S209, and S211. Residues 324-416 (KFKSINKEKR…ENFLGEDDDF (93 aa)) are disordered. Residues 356–368 (GHTPTKPSGSSVS) show a composition bias toward polar residues. Residues 369-381 (EKLKKLDSSRETS) show a composition bias toward basic and acidic residues. A phosphoserine mark is found at S441, S500, and S502. Positions 781 to 942 (ALLENMHIEQ…VQDLEVWAFD (162 aa)) constitute a TLDc domain.

This sequence belongs to the OXR1 family. Interacts with ESR1, ESR2A, ESR2B, THRB, PPARG and RARA in a ligand-inducible manner. Interacts with the heterodimer AHR-ARNT. In terms of tissue distribution, highly expressed in brain. Weakly expressed in mammary gland, ovary, uterus, prostate, stomach, bladder, spinal cord and pancreas. Expressed in cancer cell line.

The protein resides in the nucleus. In terms of biological role, enhances the transcriptional activities of several nuclear receptors. Involved in the coactivation of different nuclear receptors, such as ESR1, THRB, PPARG and RARA. This chain is Nuclear receptor coactivator 7 (NCOA7), found in Homo sapiens (Human).